The chain runs to 556 residues: Urocanate hydratase (556 aa).

NAD(+) contacts are provided by residues 52-53 (GG), glutamine 130, 176-178 (GMG), glutamate 196, arginine 201, 242-243 (NA), 263-267 (QTSAH), 273-274 (YL), and tyrosine 322. Cysteine 410 is a catalytic residue. An NAD(+)-binding site is contributed by glycine 492.

This sequence belongs to the urocanase family. It depends on NAD(+) as a cofactor.

Its subcellular location is the cytoplasm. The enzyme catalyses 4-imidazolone-5-propanoate = trans-urocanate + H2O. The protein operates within amino-acid degradation; L-histidine degradation into L-glutamate; N-formimidoyl-L-glutamate from L-histidine: step 2/3. Its function is as follows. Catalyzes the conversion of urocanate to 4-imidazolone-5-propionate. The protein is Urocanate hydratase of Bradyrhizobium diazoefficiens (strain JCM 10833 / BCRC 13528 / IAM 13628 / NBRC 14792 / USDA 110).